The primary structure comprises 224 residues: tRNA (guanine-N(7)-)-methyltransferase (224 aa).

Glu-57, Asp-82, and Asp-109 together coordinate S-adenosyl-L-methionine. Asp-167 serves as a coordination point for substrate.

Belongs to the class I-like SAM-binding methyltransferase superfamily. TrmB family.

The enzyme catalyses guanosine(46) in tRNA + S-adenosyl-L-methionine = N(7)-methylguanosine(46) in tRNA + S-adenosyl-L-homocysteine. The protein operates within tRNA modification; N(7)-methylguanine-tRNA biosynthesis. Functionally, catalyzes the formation of N(7)-methylguanine at position 46 (m7G46) in tRNA. This is tRNA (guanine-N(7)-)-methyltransferase from Chloroflexus aggregans (strain MD-66 / DSM 9485).